We begin with the raw amino-acid sequence, 343 residues long: Biotin synthase (343 aa).

The Radical SAM core domain maps to 36–254 (NTIQISTLLS…IAVARIMMPK (219 aa)). Cysteine 51, cysteine 55, and cysteine 58 together coordinate [4Fe-4S] cluster. [2Fe-2S] cluster-binding residues include cysteine 95, cysteine 126, cysteine 186, and arginine 258.

This sequence belongs to the radical SAM superfamily. Biotin synthase family. As to quaternary structure, homodimer. Requires [4Fe-4S] cluster as cofactor. It depends on [2Fe-2S] cluster as a cofactor.

The catalysed reaction is (4R,5S)-dethiobiotin + (sulfur carrier)-SH + 2 reduced [2Fe-2S]-[ferredoxin] + 2 S-adenosyl-L-methionine = (sulfur carrier)-H + biotin + 2 5'-deoxyadenosine + 2 L-methionine + 2 oxidized [2Fe-2S]-[ferredoxin]. Its pathway is cofactor biosynthesis; biotin biosynthesis; biotin from 7,8-diaminononanoate: step 2/2. Catalyzes the conversion of dethiobiotin (DTB) to biotin by the insertion of a sulfur atom into dethiobiotin via a radical-based mechanism. In Buchnera aphidicola subsp. Acyrthosiphon pisum (strain APS) (Acyrthosiphon pisum symbiotic bacterium), this protein is Biotin synthase.